A 638-amino-acid chain; its full sequence is Threonine--tRNA ligase (638 aa).

Residues 1-61 (MPIITLPDGS…NKDSKVVIIT (61 aa)) enclose the TGS domain. The segment at 242–533 (DHRKLGKKHS…LIEQYEAKFP (292 aa)) is catalytic. The Zn(2+) site is built by cysteine 333, histidine 384, and histidine 510.

The protein belongs to the class-II aminoacyl-tRNA synthetase family. In terms of assembly, homodimer. It depends on Zn(2+) as a cofactor.

It localises to the cytoplasm. The enzyme catalyses tRNA(Thr) + L-threonine + ATP = L-threonyl-tRNA(Thr) + AMP + diphosphate + H(+). Catalyzes the attachment of threonine to tRNA(Thr) in a two-step reaction: L-threonine is first activated by ATP to form Thr-AMP and then transferred to the acceptor end of tRNA(Thr). Also edits incorrectly charged L-seryl-tRNA(Thr). The protein is Threonine--tRNA ligase of Prochlorococcus marinus (strain AS9601).